Here is a 217-residue protein sequence, read N- to C-terminus: UPF0319 protein VP1009 (217 aa).

An N-terminal signal peptide occupies residues 1-21; that stretch reads MRLKTWIVAFFLGLFGTTVNA.

Belongs to the UPF0319 family.

In Vibrio parahaemolyticus serotype O3:K6 (strain RIMD 2210633), this protein is UPF0319 protein VP1009.